The chain runs to 337 residues: UDP-3-O-acylglucosamine N-acyltransferase (337 aa).

The Proton acceptor role is filled by His-238.

It belongs to the transferase hexapeptide repeat family. LpxD subfamily. As to quaternary structure, homotrimer.

It catalyses the reaction a UDP-3-O-[(3R)-3-hydroxyacyl]-alpha-D-glucosamine + a (3R)-hydroxyacyl-[ACP] = a UDP-2-N,3-O-bis[(3R)-3-hydroxyacyl]-alpha-D-glucosamine + holo-[ACP] + H(+). The protein operates within bacterial outer membrane biogenesis; LPS lipid A biosynthesis. Catalyzes the N-acylation of UDP-3-O-acylglucosamine using 3-hydroxyacyl-ACP as the acyl donor. Is involved in the biosynthesis of lipid A, a phosphorylated glycolipid that anchors the lipopolysaccharide to the outer membrane of the cell. This Xanthomonas axonopodis pv. citri (strain 306) protein is UDP-3-O-acylglucosamine N-acyltransferase.